The chain runs to 159 residues: uncharacterized protein (159 aa).

One can recognise an HTH asnC-type domain in the interval 6-66 (LSKKDWEIIK…YLRFDKLGYT (61 aa)). Positions 25–44 (DAEIGRRIGLSKSAVRWRRI) form a DNA-binding region, H-T-H motif.

This is an uncharacterized protein from Pyrococcus horikoshii (strain ATCC 700860 / DSM 12428 / JCM 9974 / NBRC 100139 / OT-3).